Consider the following 564-residue polypeptide: Phenylalanine--tRNA ligase beta subunit (564 aa).

The B5 domain maps to 286 to 362 (YFQNSLKINV…IGKGLDNFKS (77 aa)). Positions 340, 346, 349, and 350 each coordinate Mg(2+).

It belongs to the phenylalanyl-tRNA synthetase beta subunit family. Type 2 subfamily. Tetramer of two alpha and two beta subunits. The cofactor is Mg(2+).

Its subcellular location is the cytoplasm. The catalysed reaction is tRNA(Phe) + L-phenylalanine + ATP = L-phenylalanyl-tRNA(Phe) + AMP + diphosphate + H(+). The sequence is that of Phenylalanine--tRNA ligase beta subunit from Borrelia duttonii (strain Ly).